The sequence spans 591 residues: Probable sulfoacetaldehyde acetyltransferase (591 aa).

The segment at 359 to 383 is disordered; sequence MDHEDDDPGTEWNVGARQREPDRMS.

This sequence belongs to the TPP enzyme family. Mg(2+) is required as a cofactor. The cofactor is thiamine diphosphate.

It localises to the cytoplasm. The catalysed reaction is acetyl phosphate + sulfite + H(+) = sulfoacetaldehyde + phosphate. Its pathway is organosulfur degradation; taurine degradation via aerobic pathway; acetyl phosphate and sulfite from taurine: step 2/2. This is Probable sulfoacetaldehyde acetyltransferase (xsc) from Rhizobium meliloti (strain 1021) (Ensifer meliloti).